The primary structure comprises 657 residues: tRNA 5-methylaminomethyl-2-thiouridine biosynthesis bifunctional protein MnmC (657 aa).

A tRNA (mnm(5)s(2)U34)-methyltransferase region spans residues 1 to 239 (MTDRIVPATL…KRAMLVGEFA (239 aa)). The segment at 263-657 (IGAGLAGCAV…VRALRHGRVA (395 aa)) is FAD-dependent cmnm(5)s(2)U34 oxidoreductase.

In the N-terminal section; belongs to the methyltransferase superfamily. tRNA (mnm(5)s(2)U34)-methyltransferase family. It in the C-terminal section; belongs to the DAO family. Requires FAD as cofactor.

Its subcellular location is the cytoplasm. It carries out the reaction 5-aminomethyl-2-thiouridine(34) in tRNA + S-adenosyl-L-methionine = 5-methylaminomethyl-2-thiouridine(34) in tRNA + S-adenosyl-L-homocysteine + H(+). Its function is as follows. Catalyzes the last two steps in the biosynthesis of 5-methylaminomethyl-2-thiouridine (mnm(5)s(2)U) at the wobble position (U34) in tRNA. Catalyzes the FAD-dependent demodification of cmnm(5)s(2)U34 to nm(5)s(2)U34, followed by the transfer of a methyl group from S-adenosyl-L-methionine to nm(5)s(2)U34, to form mnm(5)s(2)U34. This chain is tRNA 5-methylaminomethyl-2-thiouridine biosynthesis bifunctional protein MnmC, found in Burkholderia pseudomallei (strain 668).